A 137-amino-acid chain; its full sequence is MRMGGSFVVLSGVIAIVVGSVLGGCARYFISGAVARRLGETFPWGTMTINVTGAFLIGIFGALATHPGSMFASPNPWLFAVTGFLGCYTTVSSFSLQTLTLARNGEPMHALGNVAFSVGLCLAAVSCGFLLADGLGG.

Helical transmembrane passes span 3-23, 44-64, 76-96, and 111-131; these read MGGSFVVLSGVIAIVVGSVLG, WGTMTINVTGAFLIGIFGALA, PWLFAVTGFLGCYTTVSSFSL, and LGNVAFSVGLCLAAVSCGFLL. Na(+)-binding residues include Gly-86 and Thr-89.

This sequence belongs to the fluoride channel Fluc/FEX (TC 1.A.43) family.

The protein resides in the cell inner membrane. It carries out the reaction fluoride(in) = fluoride(out). Na(+) is not transported, but it plays an essential structural role and its presence is essential for fluoride channel function. Functionally, fluoride-specific ion channel. Important for reducing fluoride concentration in the cell, thus reducing its toxicity. The chain is Fluoride-specific ion channel FluC 2 from Bradyrhizobium diazoefficiens (strain JCM 10833 / BCRC 13528 / IAM 13628 / NBRC 14792 / USDA 110).